We begin with the raw amino-acid sequence, 1292 residues long: Zinc finger CCCH domain-containing protein 44 (1292 aa).

Over residues Met1–Gln10 the composition is skewed to polar residues. Disordered regions lie at residues Met1 to Ser24 and Ile72 to Asp107. The PHD-type zinc finger occupies Glu110 to Ser176. 2 disordered regions span residues Pro256–Ala313 and Lys401–Pro426. In terms of domain architecture, SWIB/MDM2 spans Ala313–Ile396. Positions Lys404 to Val414 are enriched in polar residues. The region spanning Ala453–Ile586 is the Plus3 domain. 4 disordered regions span residues Pro624–Pro731, Thr777–Pro832, Asp876–Ser915, and Thr1170–Arg1245. Residues Gln661–Gln675 show a composition bias toward low complexity. A compositionally biased stretch (basic and acidic residues) spans Val689–Lys698. Residues Val699 to Glu708 are compositionally biased toward polar residues. A GYF domain is found at Ser716–Ala770. Over residues Val813 to Ser829 the composition is skewed to low complexity. Polar residues-rich tracts occupy residues Gly882–Lys899 and Asn906–Ser915. Composition is skewed to low complexity over residues Ser1188 to Gly1206 and Asn1231 to Asn1244. The C3H1-type zinc-finger motif lies at Pro1267–Pro1292.

This Arabidopsis thaliana (Mouse-ear cress) protein is Zinc finger CCCH domain-containing protein 44.